The following is a 124-amino-acid chain: Flowering-promoting factor 1-like protein 1 (124 aa).

A disordered region spans residues 19–42 (PYNQSAGDSSESSSSGGNQQQRMR). The segment covering 22–39 (QSAGDSSESSSSGGNQQQ) has biased composition (low complexity).

It belongs to the FPF1 family. Expressed in roots, flowers, and at a low level, in leaves.

In terms of biological role, modulates the competence to flowering of apical meristems. This is Flowering-promoting factor 1-like protein 1 (FLP1) from Arabidopsis thaliana (Mouse-ear cress).